A 394-amino-acid chain; its full sequence is S-adenosylmethionine synthase 2 (394 aa).

Mg(2+) is bound at residue Glu-11. His-17 lines the ATP pocket. Position 45 (Glu-45) interacts with K(+). 2 residues coordinate L-methionine: Glu-58 and Gln-101. ATP contacts are provided by residues 169–171 (DGK), 237–240 (SGRF), Asp-248, 254–255 (RK), Ala-271, Lys-275, and Lys-279. Asp-248 contributes to the L-methionine binding site. Position 279 (Lys-279) interacts with L-methionine.

This sequence belongs to the AdoMet synthase family. Homotetramer. It depends on Mn(2+) as a cofactor. Requires Mg(2+) as cofactor. The cofactor is Co(2+). K(+) is required as a cofactor.

The protein resides in the cytoplasm. It catalyses the reaction L-methionine + ATP + H2O = S-adenosyl-L-methionine + phosphate + diphosphate. The protein operates within amino-acid biosynthesis; S-adenosyl-L-methionine biosynthesis; S-adenosyl-L-methionine from L-methionine: step 1/1. Catalyzes the formation of S-adenosylmethionine from methionine and ATP. The reaction comprises two steps that are both catalyzed by the same enzyme: formation of S-adenosylmethionine (AdoMet) and triphosphate, and subsequent hydrolysis of the triphosphate. In Hordeum vulgare (Barley), this protein is S-adenosylmethionine synthase 2 (SAM2).